The chain runs to 151 residues: Large ribosomal subunit protein uL13 (151 aa).

A disordered region spans residues 126–151 (YPGPNHPHQAQKPEELTLNTIPNGDK). Over residues 142–151 (TLNTIPNGDK) the composition is skewed to polar residues.

Belongs to the universal ribosomal protein uL13 family. Part of the 50S ribosomal subunit.

Functionally, this protein is one of the early assembly proteins of the 50S ribosomal subunit, although it is not seen to bind rRNA by itself. It is important during the early stages of 50S assembly. The protein is Large ribosomal subunit protein uL13 of Crocosphaera subtropica (strain ATCC 51142 / BH68) (Cyanothece sp. (strain ATCC 51142)).